The chain runs to 489 residues: Dihydropyrimidinase 1 (489 aa).

Residues histidine 61, histidine 63, and lysine 156 each coordinate Zn(2+). Lysine 156 bears the N6-carboxylysine mark. Substrate is bound at residue tyrosine 161. 2 residues coordinate Zn(2+): histidine 189 and histidine 245. Serine 295 contacts substrate. Aspartate 323 serves as a coordination point for Zn(2+). Position 344 (asparagine 344) interacts with substrate.

Belongs to the metallo-dependent hydrolases superfamily. Hydantoinase/dihydropyrimidinase family. In terms of assembly, homotetramer. Requires Zn(2+) as cofactor. In terms of processing, carboxylation allows a single lysine to coordinate two zinc ions. In terms of tissue distribution, in L1-L2 larvae, expressed in body hypodermal cells, hemidesmosomes and in a neuronal cell between the pharynx and ring neuropil. In adults, expression is seen in body hypodermal cells and pharynx.

The protein localises to the nucleus. The catalysed reaction is 5,6-dihydrouracil + H2O = 3-(carbamoylamino)propanoate + H(+). In Caenorhabditis elegans, this protein is Dihydropyrimidinase 1 (dhp-1).